The primary structure comprises 361 residues: Tetraacyldisaccharide 4'-kinase (361 aa).

49–56 (TTGGTGKT) lines the ATP pocket.

Belongs to the LpxK family.

It catalyses the reaction a lipid A disaccharide + ATP = a lipid IVA + ADP + H(+). It participates in glycolipid biosynthesis; lipid IV(A) biosynthesis; lipid IV(A) from (3R)-3-hydroxytetradecanoyl-[acyl-carrier-protein] and UDP-N-acetyl-alpha-D-glucosamine: step 6/6. In terms of biological role, transfers the gamma-phosphate of ATP to the 4'-position of a tetraacyldisaccharide 1-phosphate intermediate (termed DS-1-P) to form tetraacyldisaccharide 1,4'-bis-phosphate (lipid IVA). The chain is Tetraacyldisaccharide 4'-kinase from Chlorobaculum parvum (strain DSM 263 / NCIMB 8327) (Chlorobium vibrioforme subsp. thiosulfatophilum).